A 208-amino-acid polypeptide reads, in one-letter code: Interleukin-6 (208 aa).

A signal peptide spans Met-1–Pro-29. N-linked (GlcNAc...) asparagine glycosylation occurs at Asn-38. An intrachain disulfide couples Cys-72 to Cys-78. Ser-81 carries the post-translational modification Phosphoserine. A disulfide bridge connects residues Cys-101 and Cys-111.

It belongs to the IL-6 superfamily. Component of a hexamer of two molecules each of IL6, IL6R and IL6ST; first binds to IL6R to associate with the signaling subunit IL6ST. Interacts with IL6R (via the N-terminal ectodomain); this interaction may be affected by IL6R-binding with SORL1, hence decreasing IL6 cis signaling. Interacts with SORL1 (via the N-terminal ectodomain); this interaction leads to IL6 internalization and lysosomal degradation. May form a trimeric complex with the soluble SORL1 ectodomain and soluble IL6R receptor; this interaction might stabilize circulating IL6, hence promoting IL6 trans signaling.

It localises to the secreted. Cytokine with a wide variety of biological functions in immunity, tissue regeneration, and metabolism. Binds to IL6R, then the complex associates to the signaling subunit IL6ST/gp130 to trigger the intracellular IL6-signaling pathway. The interaction with the membrane-bound IL6R and IL6ST stimulates 'classic signaling', whereas the binding of IL6 and soluble IL6R to IL6ST stimulates 'trans-signaling'. Alternatively, 'cluster signaling' occurs when membrane-bound IL6:IL6R complexes on transmitter cells activate IL6ST receptors on neighboring receiver cells. Functionally, IL6 is a potent inducer of the acute phase response. Rapid production of IL6 contributes to host defense during infection and tissue injury, but excessive IL6 synthesis is involved in disease pathology. In the innate immune response, is synthesized by myeloid cells, such as macrophages and dendritic cells, upon recognition of pathogens through toll-like receptors (TLRs) at the site of infection or tissue injury. In the adaptive immune response, is required for the differentiation of B cells into immunoglobulin-secreting cells. Plays a major role in the differentiation of CD4(+) T cell subsets. Essential factor for the development of T follicular helper (Tfh) cells that are required for the induction of germinal-center formation. Required to drive naive CD4(+) T cells to the Th17 lineage. Also required for proliferation of myeloma cells and the survival of plasmablast cells. In terms of biological role, acts as an essential factor in bone homeostasis and on vessels directly or indirectly by induction of VEGF, resulting in increased angiogenesis activity and vascular permeability. Induces, through 'trans-signaling' and synergistically with IL1B and TNF, the production of VEGF. Involved in metabolic controls, is discharged into the bloodstream after muscle contraction increasing lipolysis and improving insulin resistance. 'Trans-signaling' in central nervous system also regulates energy and glucose homeostasis. Mediates, through GLP-1, crosstalk between insulin-sensitive tissues, intestinal L cells and pancreatic islets to adapt to changes in insulin demand. Also acts as a myokine. Plays a protective role during liver injury, being required for maintenance of tissue regeneration. Also has a pivotal role in iron metabolism by regulating HAMP/hepcidin expression upon inflammation or bacterial infection. Through activation of IL6ST-YAP-NOTCH pathway, induces inflammation-induced epithelial regeneration. This chain is Interleukin-6 (IL6), found in Bos taurus (Bovine).